Here is a 328-residue protein sequence, read N- to C-terminus: Malate dehydrogenase (328 aa).

11–17 (GAAGQIG) contacts NAD(+). The substrate site is built by R94 and R100. Residues N107, Q114, and 131 to 133 (VGN) each bind NAD(+). Residues N133 and R164 each coordinate substrate. The active-site Proton acceptor is H189.

The protein belongs to the LDH/MDH superfamily. MDH type 2 family.

It carries out the reaction (S)-malate + NAD(+) = oxaloacetate + NADH + H(+). Its function is as follows. Catalyzes the reversible oxidation of malate to oxaloacetate. The sequence is that of Malate dehydrogenase from Xylella fastidiosa (strain Temecula1 / ATCC 700964).